The following is a 3926-amino-acid chain: Protein bassoon (3926 aa).

Residues 1–161 form a disordered region; that stretch reads MGNEVSLEGG…PTSPYSVPQI (161 aa). Gly-2 is lipidated: N-myristoyl glycine. Pro residues-rich tracts occupy residues 15-30 and 58-72; these read PLPP…PGPG and PPVP…PGPG. The tract at residues 23–32 is 5 X 2 AA tandem repeats of P-G; it reads PGPGPGPGPG. Residues 61-74 are 7 X 2 AA tandem repeats of P-G; it reads PGPGPGPGPGPGPG. Polar residues-rich tracts occupy residues 90 to 105 and 130 to 157; these read RAAS…TTPG and QVDS…SPYS. Residue Ser-145 is modified to Phosphoserine. Position 148 is an omega-N-methylarginine (Arg-148). C4-type zinc fingers lie at residues 170–193 and 198–220; these read CPIC…CTQC and CNQC…CLNC. Disordered regions lie at residues 231 to 343 and 366 to 459; these read TTAP…EQTQ and SVQP…KTMP. The segment covering 233-243 has biased composition (polar residues); the sequence is APRSKSQQQLH. Ser-244 and Ser-248 each carry phosphoserine. Polar residues predominate over residues 366–377; the sequence is SVQPEADTQGQP. 2 consecutive C4-type zinc fingers follow at residues 465 to 488 and 493 to 515; these read CPLC…CTTC and CNLC…CLNC. Disordered regions lie at residues 524 to 927 and 940 to 1248; these read SLGE…LQGG and GSYG…AEGT. Residues 552–569 are compositionally biased toward low complexity; sequence PLKQKGPQGLGQPSGPLP. 3 tandem repeats follow at residues 571–577, 578–584, and 585–591. The tract at residues 571–591 is 3 X 7 AA tandem repeats of K-A-S-P-[LQ]-[APS]-[KST]; sequence KASPLSTKASPLPSKASPQAK. A compositionally biased stretch (pro residues) spans 619 to 631; sequence MPKPPPETTPTPA. Polar residues predominate over residues 671–680; that stretch reads QDASRSPQSL. Over residues 681 to 698 the composition is skewed to low complexity; sequence SDTGYSSDGISSSQSEIT. Positions 771-787 are enriched in acidic residues; the sequence is FDSDEELEDILEEDEDS. The segment covering 788–797 has biased composition (basic and acidic residues); the sequence is AEWRRRREQQ. The segment covering 851 to 862 has biased composition (acidic residues); that stretch reads SAEEDNLEEDDT. Arg-867 is subject to Omega-N-methylarginine. Ser-970 carries the phosphoserine modification. The segment covering 984-1001 has biased composition (low complexity); it reads PASTPSYTSGTSPTSLSS. The stretch at 1037-1092 forms a coiled coil; sequence IEDSSEEEELREEEELLREQEKMREVEQQRIRSTARKTRRDKEELRAQRRRERSKT. Residues 1039–1052 show a composition bias toward acidic residues; it reads DSSEEEELREEEEL. Ser-1040 and Ser-1041 each carry phosphoserine. Residues 1053-1066 show a composition bias toward basic and acidic residues; sequence LREQEKMREVEQQR. Ser-1090 carries the phosphoserine modification. Phosphothreonine is present on Thr-1092. 2 positions are modified to phosphoserine: Ser-1098 and Ser-1104. Residues 1107 to 1122 show a composition bias toward basic and acidic residues; that stretch reads EELRQAAEMEELHRSS. 2 stretches are compositionally biased toward low complexity: residues 1123–1133 and 1163–1180; these read CSEYSPSPSLD and SPTE…SGRP. Residues 1181–1208 adopt a coiled-coil conformation; the sequence is LKSAEEAYEEMMRKAELLQRQQGQAAGA. Residues 1182–1197 show a composition bias toward basic and acidic residues; that stretch reads KSAEEAYEEMMRKAEL. The segment covering 1199–1209 has biased composition (low complexity); the sequence is QRQQGQAAGAR. The residue at position 1226 (Ser-1226) is a Phosphoserine. Residues 1276–1294 adopt a coiled-coil conformation; it reads RDLAFAEDKKKEKQFLNAE. Disordered stretches follow at residues 1298 to 1547 and 1570 to 1620; these read MDPM…RLVW and RMVH…RVPS. Positions 1322–1332 are enriched in low complexity; the sequence is SFSTPTSSDSS. Thr-1343 carries an O-linked (GlcNAc) threonine glycan. The segment covering 1346-1355 has biased composition (basic and acidic residues); that stretch reads FAKETQDPLK. 2 stretches are compositionally biased toward low complexity: residues 1358 to 1367 and 1377 to 1392; these read SSPASPSSAS and GPGT…CPAG. Thr-1384 carries O-linked (GlcNAc) threonine glycosylation. Residues 1408–1434 are compositionally biased toward polar residues; that stretch reads RSPSPSSTAHSYGHSPTTANYGSQTED. The span at 1466-1493 shows a compositional bias: low complexity; sequence PSRAYSYFASSSPPLSPSSPSESPTFSP. Ser-1477, Ser-1486, and Ser-1488 each carry phosphoserine. A compositionally biased stretch (polar residues) spans 1570-1598; the sequence is RMVHASASTSPLCSPTETQPTTHGYSQTT. Over residues 1606–1616 the composition is skewed to pro residues; that stretch reads PPEPPGPPGFP. Arg-1787 and Arg-1791 each carry omega-N-methylarginine. Position 1801 is an asymmetric dimethylarginine; alternate (Arg-1801). At Arg-1801 the chain carries Omega-N-methylarginine; alternate. Position 1813 is an omega-N-methylarginine (Arg-1813). Residues 1924–1978 are disordered; sequence PEKSMADAAPPGQSSSPFYGPRDPEPPEPPTYRAQGVVGPGPHEEQRPYPQGLPG. Ser-1985 and Ser-2041 each carry phosphoserine. Omega-N-methylarginine is present on residues Arg-2046 and Arg-2076. Asymmetric dimethylarginine is present on residues Arg-2250, Arg-2260, and Arg-2266. A disordered region spans residues 2287-2309; it reads AAKAPGAGGPSRPEMPVGAAREE. An O-linked (GlcNAc) threonine glycan is attached at Thr-2314. Positions 2324–2341 are enriched in low complexity; the sequence is GAPAPAPLAGQKPPADAA. 2 disordered regions span residues 2324-2370 and 2532-2568; these read GAPA…KQQE and PSSA…ACEL. Positions 2351-2476 form a coiled coil; sequence RPGFEKEEAS…EEQKQRQKAP (126 aa). Positions 2353–2370 are enriched in basic and acidic residues; the sequence is GFEKEEASQEERQRKQQE. Positions 2533–2543 are enriched in polar residues; the sequence is SSASDMSLQTE. Ser-2570 carries the post-translational modification Phosphoserine. 2 positions are modified to phosphothreonine: Thr-2587 and Thr-2614. Positions 2601 to 2655 are disordered; that stretch reads RRRARRSADCSVQTDDEDSAEWEQPVRRRRSRLPRHSDSGSDSKHDATASSSSAA. Positions 2635-2647 are enriched in basic and acidic residues; it reads RHSDSGSDSKHDA. Thr-2691 is a glycosylation site (O-linked (GlcNAc) threonine). The interval 2721-3268 is interaction with DAO; sequence EPDGQAQGVA…PGSSGRPGKE (548 aa). 3 positions are modified to phosphoserine: Ser-2802, Ser-2851, and Ser-2857. Positions 2845–2865 are disordered; the sequence is TLQRSLSDPKPLSPTAEESAK. Thr-2936 carries an O-linked (GlcNAc) threonine glycan. The stretch at 2939–2981 forms a coiled coil; it reads SLLRELDRDLRLVEHESTKLRKKQAELDEEEKEIDAKLKYLEL. At Ser-3013 the chain carries Phosphoserine. A compositionally biased stretch (low complexity) spans 3039 to 3055; sequence AAAPATPSGPTAFQQPR. Disordered stretches follow at residues 3039–3375, 3424–3551, and 3572–3897; these read AAAP…FSPI, GMSS…PRAH, and EAYH…SVFS. A compositionally biased stretch (pro residues) spans 3083-3095; the sequence is YPGPSTYPAPAFP. The segment covering 3165–3176 has biased composition (low complexity); sequence ASPVVPMSSAPS. Polar residues predominate over residues 3205–3228; sequence SVSQSPAPTYPSDSHYTSLEQNVP. At Ser-3291 the chain carries Phosphoserine. 3 stretches are compositionally biased toward basic and acidic residues: residues 3321–3333, 3363–3375, and 3465–3477; these read GDSD…RVEK, QGME…FSPI, and GYER…ERLQ. Ser-3373 bears the Phosphoserine mark. Arg-3492 carries the omega-N-methylarginine modification. 4 stretches are compositionally biased toward basic and acidic residues: residues 3540 to 3551, 3583 to 3593, 3628 to 3647, and 3657 to 3681; these read VQEHVKDGPRAH, WFDKPRDARSD, LWPH…EHRH, and HTGE…EARP. The span at 3703–3712 shows a compositional bias: polar residues; the sequence is AEYSQPSRAS. Residues 3741 to 3807 show a composition bias toward low complexity; sequence PQAQPQLQGR…RLQQQSQPTT (67 aa). An Omega-N-methylarginine modification is found at Arg-3808. Composition is skewed to low complexity over residues 3849–3860 and 3882–3892; these read AKAPQQGRAPQA and GAPAGQPGADG.

Interacts with PCLO, ERC2/CAST1, RIMS1 and UNC13A. Interacts with TPRG1L. Interacts with DYNLL1 and DYNLL2; these interactions potentially link PTVs to dynein and myosin V motor complexes. Interacts with ATG5; this interaction is important for the regulation of presynaptic autophagy. Interacts (via C-terminus) with TRIO (via N-terminus). Interacts with CTBP1. Interacts with SIAH1; this interaction negatively regulates SIAH1 E3 ligase activity. Interacts (via coiled region) with DAO; the interaction is direct. Myristoylated. The N-terminal myristoylation is not sufficient for presynaptic localization. Exclusively expressed in brain.

It localises to the cytoplasm. It is found in the presynaptic active zone. Its subcellular location is the cytoskeleton. The protein localises to the cytoplasmic vesicle. The protein resides in the secretory vesicle. It localises to the synaptic vesicle membrane. Scaffold protein of the presynaptic cytomatrix at the active zone (CAZ) which is the place in the synapse where neurotransmitter is released. After synthesis, participates in the formation of Golgi-derived membranous organelles termed Piccolo-Bassoon transport vesicles (PTVs) that are transported along axons to sites of nascent synaptic contacts. At the presynaptic active zone, regulates the spatial organization of synaptic vesicle cluster, the protein complexes that execute membrane fusion and compensatory endocytosis. Also functions in processes other than assembly such as the regulation of specific presynaptic protein ubiquitination by interacting with SIAH1 or the regulation of presynaptic autophagy by associating with ATG5. Also mediates synapse to nucleus communication leading to reconfiguration of gene expression by associating with the transcriptional corepressor CTBP1 and by subsequently reducing the size of its pool available for nuclear import. Inhibits the activity of the proportion of DAO enzyme that localizes to the presynaptic active zone, which may modulate synaptic transmission. This is Protein bassoon from Homo sapiens (Human).